The chain runs to 403 residues: Phosphopentomutase (403 aa).

6 residues coordinate Mn(2+): aspartate 13, aspartate 298, histidine 303, aspartate 339, histidine 340, and histidine 351.

This sequence belongs to the phosphopentomutase family. Requires Mn(2+) as cofactor.

The protein resides in the cytoplasm. The enzyme catalyses 2-deoxy-alpha-D-ribose 1-phosphate = 2-deoxy-D-ribose 5-phosphate. The catalysed reaction is alpha-D-ribose 1-phosphate = D-ribose 5-phosphate. It participates in carbohydrate degradation; 2-deoxy-D-ribose 1-phosphate degradation; D-glyceraldehyde 3-phosphate and acetaldehyde from 2-deoxy-alpha-D-ribose 1-phosphate: step 1/2. Functionally, isomerase that catalyzes the conversion of deoxy-ribose 1-phosphate (dRib-1-P) and ribose 1-phosphate (Rib-1-P) to deoxy-ribose 5-phosphate (dRib-5-P) and ribose 5-phosphate (Rib-5-P), respectively. The chain is Phosphopentomutase from Streptococcus thermophilus (strain ATCC BAA-491 / LMD-9).